The following is a 216-amino-acid chain: Glycerol-3-phosphate acyltransferase (216 aa).

The next 5 membrane-spanning stretches (helical) occupy residues 11–31, 62–82, 95–115, 132–152, and 171–191; these read LVLG…FGLV, LALA…LVAS, VLAG…PIWL, ATAW…AALF, and LVLA…LAWI.

It belongs to the PlsY family. In terms of assembly, probably interacts with PlsX.

It localises to the cell inner membrane. It carries out the reaction an acyl phosphate + sn-glycerol 3-phosphate = a 1-acyl-sn-glycero-3-phosphate + phosphate. It functions in the pathway lipid metabolism; phospholipid metabolism. In terms of biological role, catalyzes the transfer of an acyl group from acyl-phosphate (acyl-PO(4)) to glycerol-3-phosphate (G3P) to form lysophosphatidic acid (LPA). This enzyme utilizes acyl-phosphate as fatty acyl donor, but not acyl-CoA or acyl-ACP. This is Glycerol-3-phosphate acyltransferase from Rhodospirillum rubrum (strain ATCC 11170 / ATH 1.1.1 / DSM 467 / LMG 4362 / NCIMB 8255 / S1).